The chain runs to 238 residues: Large ribosomal subunit protein uL1 (238 aa).

Belongs to the universal ribosomal protein uL1 family. In terms of assembly, part of the 50S ribosomal subunit.

In terms of biological role, binds directly to 23S rRNA. The L1 stalk is quite mobile in the ribosome, and is involved in E site tRNA release. Functionally, protein L1 is also a translational repressor protein, it controls the translation of the L11 operon by binding to its mRNA. The chain is Large ribosomal subunit protein uL1 from Salinispora arenicola (strain CNS-205).